The following is a 334-amino-acid chain: L-lactate dehydrogenase B chain (334 aa).

A2 is subject to N-acetylalanine. K7 carries the post-translational modification N6-acetyllysine. Residue S44 is modified to Phosphoserine. NAD(+)-binding positions include 53-58 (DVLEDK) and R100. K58 carries the post-translational modification N6-acetyllysine. A substrate-binding site is contributed by R107. K119 bears the N6-acetyllysine mark. Residue N139 coordinates NAD(+). N139 and R170 together coordinate substrate. The active-site Proton acceptor is H194. Residue Y240 is modified to Phosphotyrosine. Position 249 (T249) interacts with substrate. K329 carries the post-translational modification N6-acetyllysine.

This sequence belongs to the LDH/MDH superfamily. LDH family. Homotetramer. Interacts with PTEN upstream reading frame protein MP31; the interaction leads to inhibition of mitochondrial lactate dehydrogenase activity, preventing conversion of lactate to pyruvate in mitochondria.

Its subcellular location is the cytoplasm. The protein resides in the mitochondrion inner membrane. The enzyme catalyses (S)-lactate + NAD(+) = pyruvate + NADH + H(+). The protein operates within fermentation; pyruvate fermentation to lactate; (S)-lactate from pyruvate: step 1/1. Interconverts simultaneously and stereospecifically pyruvate and lactate with concomitant interconversion of NADH and NAD(+). This Bos taurus (Bovine) protein is L-lactate dehydrogenase B chain (LDHB).